The following is a 252-amino-acid chain: Electron transfer flavoprotein subunit beta (252 aa).

Belongs to the ETF beta-subunit/FixA family. As to quaternary structure, heterodimer of an alpha and a beta subunit. The cofactor is AMP.

It is found in the cytoplasm. It participates in lipid metabolism; butanoate metabolism. In terms of biological role, part of an electron transfer flavoprotein involved in syntrophic growth of S.wolfei with butyrate. Probably receives electrons from butyryl-CoA dehydrogenases, and transfers them to the membrane-bound quinone oxidoreductase Swol_0698. This is Electron transfer flavoprotein subunit beta from Syntrophomonas wolfei subsp. wolfei (strain DSM 2245B / Goettingen).